A 132-amino-acid polypeptide reads, in one-letter code: Large ribosomal subunit protein uL14 (132 aa).

Belongs to the universal ribosomal protein uL14 family. In terms of assembly, part of the 50S ribosomal subunit. Forms a cluster with proteins L3 and L24e, part of which may contact the 16S rRNA in 2 intersubunit bridges.

In terms of biological role, binds to 23S rRNA. Forms part of two intersubunit bridges in the 70S ribosome. The chain is Large ribosomal subunit protein uL14 from Natronomonas pharaonis (strain ATCC 35678 / DSM 2160 / CIP 103997 / JCM 8858 / NBRC 14720 / NCIMB 2260 / Gabara) (Halobacterium pharaonis).